A 304-amino-acid polypeptide reads, in one-letter code: UDP-3-O-acyl-N-acetylglucosamine deacetylase (304 aa).

Histidine 78, histidine 237, and aspartate 241 together coordinate Zn(2+). Histidine 264 (proton donor) is an active-site residue.

It belongs to the LpxC family. Requires Zn(2+) as cofactor.

The catalysed reaction is a UDP-3-O-[(3R)-3-hydroxyacyl]-N-acetyl-alpha-D-glucosamine + H2O = a UDP-3-O-[(3R)-3-hydroxyacyl]-alpha-D-glucosamine + acetate. Its pathway is glycolipid biosynthesis; lipid IV(A) biosynthesis; lipid IV(A) from (3R)-3-hydroxytetradecanoyl-[acyl-carrier-protein] and UDP-N-acetyl-alpha-D-glucosamine: step 2/6. Its function is as follows. Catalyzes the hydrolysis of UDP-3-O-myristoyl-N-acetylglucosamine to form UDP-3-O-myristoylglucosamine and acetate, the committed step in lipid A biosynthesis. In Acidithiobacillus ferrooxidans (strain ATCC 53993 / BNL-5-31) (Leptospirillum ferrooxidans (ATCC 53993)), this protein is UDP-3-O-acyl-N-acetylglucosamine deacetylase.